A 1024-amino-acid polypeptide reads, in one-letter code: Beta-galactosidase (1024 aa).

Substrate is bound by residues asparagine 103 and aspartate 202. A Na(+)-binding site is contributed by aspartate 202. Positions 417, 419, and 462 each coordinate Mg(2+). Substrate contacts are provided by residues glutamate 462 and 538–541 (EYAH). The Proton donor role is filled by glutamate 462. Glutamate 538 serves as the catalytic Nucleophile. Residue asparagine 598 coordinates Mg(2+). Na(+)-binding residues include phenylalanine 602 and asparagine 605. Residues asparagine 605 and tryptophan 1000 each contribute to the substrate site.

This sequence belongs to the glycosyl hydrolase 2 family. In terms of assembly, homotetramer. The cofactor is Mg(2+). Na(+) serves as cofactor.

It carries out the reaction Hydrolysis of terminal non-reducing beta-D-galactose residues in beta-D-galactosides.. This Shigella dysenteriae serotype 1 (strain Sd197) protein is Beta-galactosidase.